We begin with the raw amino-acid sequence, 447 residues long: Clusterin (447 aa).

An N-terminal signal peptide occupies residues 1–21; that stretch reads MKILLLCVALLLTWDNGMVLG. A Nuclear localization signal motif is present at residues 77-80; that stretch reads KKKK. Cystine bridges form between C101–C312, C112–C304, C115–C301, C120–C294, and C128–C284. N102 carries N-linked (GlcNAc...) asparagine glycosylation. S132 carries the post-translational modification Phosphoserine. 5 N-linked (GlcNAc...) asparagine glycosylation sites follow: N144, N290, N327, N353, and N373. S394 is modified (phosphoserine). Positions 441-445 match the Nuclear localization signal motif; sequence RRKSR.

It belongs to the clusterin family. As to quaternary structure, antiparallel disulfide-linked heterodimer of an alpha chain and a beta chain. Self-associates and forms higher oligomers. Interacts with a broad range of misfolded proteins, including APP, APOC2 and LYZ. Slightly acidic pH promotes interaction with misfolded proteins. Forms high-molecular weight oligomers upon interaction with misfolded proteins. Interacts with APOA1, LRP2, CLUAP1 and PON1. Interacts with the complement membrane attack complex. Interacts (via alpha chain) with XRCC6. Interacts with SYVN1, COMMD1, BTRC, CUL1 and with ubiquitin and SCF (SKP1-CUL1-F-box protein) E3 ubiquitin-protein ligase complexes. Interacts (via alpha chain) with BAX in stressed cells, where BAX undergoes a conformation change leading to association with the mitochondrial membrane. Does not interact with BAX in unstressed cells. Found in a complex with LTF, CLU, EPPIN and SEMG1. Interacts (immaturely glycosylated pre-secreted form) with HSPA5; this interaction promotes CLU stability and facilitates stress-induced CLU retrotranslocation from the secretory pathway to the mitochondria, thereby reducing stress-induced apoptosis by stabilizing mitochondrial membrane integrity. Interacts with BCL2L1; this interaction releases and activates BAX and promotes cell death. Interacts with TGFBR2 and ACVR1. Interacts (secreted form) with STMN3; this interaction may act as an important modulator during neuronal differentiation. Interacts with VLDLR and LRP8. Post-translationally, proteolytically cleaved on its way through the secretory system, probably within the Golgi lumen. Proteolytic cleavage is not necessary for its chaperone activity. All non-secreted forms are not proteolytically cleaved. Chaperone activity of uncleaved forms is dependent on a non-reducing environment. In terms of processing, polyubiquitinated, leading to proteasomal degradation. Under cellular stress, the intracellular level of cleaved form is reduced due to proteasomal degradation. Extensively glycosylated with sulfated N-linked carbohydrates. About 30% of the protein mass is comprised of complex N-linked carbohydrate. Endoplasmic reticulum (ER) stress induces changes in glycosylation status and increases level of hypoglycosylated forms. Core carbohydrates are essential for chaperone activity. Non-secreted forms are hypoglycosylated or unglycosylated. In terms of tissue distribution, detected in Sertoli cells (at protein level). Detected in cultured Sertoli cells, testis, epididymis, liver and brain.

Its subcellular location is the secreted. The protein localises to the nucleus. It is found in the cytoplasm. The protein resides in the mitochondrion membrane. It localises to the cytosol. Its subcellular location is the microsome. The protein localises to the endoplasmic reticulum. It is found in the mitochondrion. The protein resides in the perinuclear region. It localises to the cytoplasmic vesicle. Its subcellular location is the secretory vesicle. The protein localises to the chromaffin granule. Its function is as follows. Functions as extracellular chaperone that prevents aggregation of non native proteins. Prevents stress-induced aggregation of blood plasma proteins. Inhibits formation of amyloid fibrils by APP, APOC2, B2M, CALCA, CSN3, SNCA and aggregation-prone LYZ variants (in vitro). Does not require ATP. Maintains partially unfolded proteins in a state appropriate for subsequent refolding by other chaperones, such as HSPA8/HSC70. Does not refold proteins by itself. Binding to cell surface receptors triggers internalization of the chaperone-client complex and subsequent lysosomal or proteasomal degradation. When secreted, protects cells against apoptosis and against cytolysis by complement: inhibits assembly of the complement membrane attack complex (MAC) by preventing polymerization of C9 pore component of the MAC complex. Intracellular forms interact with ubiquitin and SCF (SKP1-CUL1-F-box protein) E3 ubiquitin-protein ligase complexes and promote the ubiquitination and subsequent proteasomal degradation of target proteins. Promotes proteasomal degradation of COMMD1 and IKBKB. Modulates NF-kappa-B transcriptional activity. Following stress, promotes apoptosis. Inhibits apoptosis when associated with the mitochondrial membrane by interference with BAX-dependent release of cytochrome c into the cytoplasm. Plays a role in the regulation of cell proliferation. An intracellular form suppresses stress-induced apoptosis by stabilizing mitochondrial membrane integrity through interaction with HSPA5. Secreted form does not affect caspase or BAX-mediated intrinsic apoptosis and TNF-induced NF-kappa-B-activity. Secreted form act as an important modulator during neuronal differentiation through interaction with STMN3. Plays a role in the clearance of immune complexes that arise during cell injury. The chain is Clusterin from Rattus norvegicus (Rat).